Consider the following 144-residue polypeptide: Peptide methionine sulfoxide reductase MsrB (144 aa).

One can recognise a MsrB domain in the interval 5-128 (KEELRQRIGE…NSAALQFIPV (124 aa)). Cysteine 117 (nucleophile) is an active-site residue.

It belongs to the MsrB Met sulfoxide reductase family.

The enzyme catalyses L-methionyl-[protein] + [thioredoxin]-disulfide + H2O = L-methionyl-(R)-S-oxide-[protein] + [thioredoxin]-dithiol. In Ligilactobacillus salivarius (strain UCC118) (Lactobacillus salivarius), this protein is Peptide methionine sulfoxide reductase MsrB.